Reading from the N-terminus, the 267-residue chain is Hydroxyethylthiazole kinase (267 aa).

M46 serves as a coordination point for substrate. 2 residues coordinate ATP: R122 and S168. G195 is a substrate binding site.

The protein belongs to the Thz kinase family. Mg(2+) is required as a cofactor.

The enzyme catalyses 5-(2-hydroxyethyl)-4-methylthiazole + ATP = 4-methyl-5-(2-phosphooxyethyl)-thiazole + ADP + H(+). The protein operates within cofactor biosynthesis; thiamine diphosphate biosynthesis; 4-methyl-5-(2-phosphoethyl)-thiazole from 5-(2-hydroxyethyl)-4-methylthiazole: step 1/1. Its function is as follows. Catalyzes the phosphorylation of the hydroxyl group of 4-methyl-5-beta-hydroxyethylthiazole (THZ). In Nitratidesulfovibrio vulgaris (strain ATCC 29579 / DSM 644 / CCUG 34227 / NCIMB 8303 / VKM B-1760 / Hildenborough) (Desulfovibrio vulgaris), this protein is Hydroxyethylthiazole kinase.